The following is a 500-amino-acid chain: Matrilin-1 (500 aa).

The N-terminal stretch at 1 to 29 (MKVTSGPAFALCSLLLLLLLLLQVPDSLS) is a signal peptide. Positions 30–226 (LVPQPRGHLC…AKKFQEAFCV (197 aa)) constitute a VWFA 1 domain. N80 carries an N-linked (GlcNAc...) asparagine glycan. Residues 227–267 (VSDLCATGDHDCEQLCVSSPGSYTCACHEGFTLNSDGKTCN) enclose the EGF-like domain. Intrachain disulfides connect C231-C242, C238-C251, and C253-C266. The 190-residue stretch at 268–457 (VCRGGGSGSA…GKKLQKQICV (190 aa)) folds into the VWFA 2 domain. An N-linked (GlcNAc...) asparagine glycan is attached at N348. A coiled-coil region spans residues 471-499 (EAKVEGLLQALTRKLEAVSGRLAVLENRI).

Homotrimer. Part of a complex composed of MATN1 (via VWFA1 domain), type 2 collagens and type 6 collagens. Forms a complex (via covalent bonds) with ACAN; the interaction increases in abundance with increasing age of the organism via an increase in occupancy of MATN1 binding sites. Interacts with COMP. N-glycosylated; reduces binding affinity for type 2 collagens. Expressed in femoral head articular cartilage. Expressed in the trachea and extraskeletal tissue around the eye.

The protein localises to the secreted. It localises to the extracellular space. It is found in the extracellular matrix. A major component of the extracellular matrix of non-articular cartilage. Binds to type 2 collagens and forms long concatenated protein networks as part of the extracellular matrix. Required for the network-like organization and bundling of collagen fibrils surrounding chondrocytes in the zones of maturation and hypertrophy. Required for mechanotransduction and adaption to mechanical loading in cartilage chondrocytes, resulting in an increase in expression of the extracellular matrix components ACAN and COL2A1. Acts as a moderator of angiogenesis in response to injury. The protein is Matrilin-1 of Mus musculus (Mouse).